A 452-amino-acid chain; its full sequence is Chromosomal replication initiator protein DnaA (452 aa).

The tract at residues 1 to 73 (MSPNSTLWQT…NELATKYSST (73 aa)) is domain I, interacts with DnaA modulators. Residues 73–102 (TPVRLKFVSQEEVIEEPVADRKLTIDYRQG) form a domain II region. The tract at residues 103-323 (NLNSTYTFDS…GALIRLISYA (221 aa)) is domain III, AAA+ region. Residues G147, G149, K150, and T151 each contribute to the ATP site. The segment at 324–452 (QTFNLEITMN…VKKIDSPLLK (129 aa)) is domain IV, binds dsDNA.

The protein belongs to the DnaA family. In terms of assembly, oligomerizes as a right-handed, spiral filament on DNA at oriC.

It localises to the cytoplasm. Its function is as follows. Plays an essential role in the initiation and regulation of chromosomal replication. ATP-DnaA binds to the origin of replication (oriC) to initiate formation of the DNA replication initiation complex once per cell cycle. Binds the DnaA box (a 9 base pair repeat at the origin) and separates the double-stranded (ds)DNA. Forms a right-handed helical filament on oriC DNA; dsDNA binds to the exterior of the filament while single-stranded (ss)DNA is stabiized in the filament's interior. The ATP-DnaA-oriC complex binds and stabilizes one strand of the AT-rich DNA unwinding element (DUE), permitting loading of DNA polymerase. After initiation quickly degrades to an ADP-DnaA complex that is not apt for DNA replication. Binds acidic phospholipids. This Acholeplasma laidlawii (strain PG-8A) protein is Chromosomal replication initiator protein DnaA.